Consider the following 72-residue polypeptide: Mitotic-spindle organizing protein 1 (72 aa).

Belongs to the MOZART1 family. In terms of assembly, part of the gamma-tubulin complex.

It localises to the cytoplasm. It is found in the cytoskeleton. The protein localises to the microtubule organizing center. The protein resides in the centrosome. Its subcellular location is the spindle. Required for gamma-tubulin complex recruitment to the centrosome. In Xenopus tropicalis (Western clawed frog), this protein is Mitotic-spindle organizing protein 1 (mzt1).